The chain runs to 316 residues: Ribosomal RNA small subunit methyltransferase H (316 aa).

S-adenosyl-L-methionine contacts are provided by residues 35–37, aspartate 55, phenylalanine 84, aspartate 105, and glutamine 112; that span reads AGH.

It belongs to the methyltransferase superfamily. RsmH family.

The protein localises to the cytoplasm. It catalyses the reaction cytidine(1402) in 16S rRNA + S-adenosyl-L-methionine = N(4)-methylcytidine(1402) in 16S rRNA + S-adenosyl-L-homocysteine + H(+). Its function is as follows. Specifically methylates the N4 position of cytidine in position 1402 (C1402) of 16S rRNA. The sequence is that of Ribosomal RNA small subunit methyltransferase H from Streptococcus pneumoniae (strain Hungary19A-6).